A 180-amino-acid polypeptide reads, in one-letter code: Peroxisome assembly protein 22 (180 aa).

A helical transmembrane segment spans residues 15-32; that stretch reads LGIVGTAIAVLVTSYYIY.

Belongs to the peroxin-22 family.

Its subcellular location is the peroxisome membrane. Functionally, involved in peroxisome biogenesis. The protein is Peroxisome assembly protein 22 (PEX22) of Saccharomyces cerevisiae (strain ATCC 204508 / S288c) (Baker's yeast).